Here is a 1173-residue protein sequence, read N- to C-terminus: DNA polymerase III subunit alpha (1173 aa).

Belongs to the DNA polymerase type-C family. DnaE subfamily. As to quaternary structure, DNA polymerase III contains a core (composed of alpha, epsilon and theta chains) that associates with a tau subunit. This core dimerizes to form the PolIII' complex. PolIII' associates with the gamma complex (composed of gamma, delta, delta', psi and chi chains) and with the beta chain to form the complete DNA polymerase III complex.

The protein localises to the cytoplasm. It carries out the reaction DNA(n) + a 2'-deoxyribonucleoside 5'-triphosphate = DNA(n+1) + diphosphate. In terms of biological role, DNA polymerase III is a complex, multichain enzyme responsible for most of the replicative synthesis in bacteria. This DNA polymerase also exhibits 3' to 5' exonuclease activity. The alpha chain is the DNA polymerase. The protein is DNA polymerase III subunit alpha (dnaE) of Pseudomonas fluorescens.